The primary structure comprises 265 residues: Probable cell division protein kinase ECU08_0230 (265 aa).

The region spanning 4–263 (YILGALIGSG…IMEILENEYG (260 aa)) is the Protein kinase domain. ATP contacts are provided by residues 10–18 (IGSGTYGEV) and lysine 33. The Proton acceptor role is filled by aspartate 121.

Belongs to the protein kinase superfamily. CMGC Ser/Thr protein kinase family. CDC2/CDKX subfamily.

The protein resides in the nucleus. The enzyme catalyses L-seryl-[protein] + ATP = O-phospho-L-seryl-[protein] + ADP + H(+). The catalysed reaction is L-threonyl-[protein] + ATP = O-phospho-L-threonyl-[protein] + ADP + H(+). In terms of biological role, may play a role in the control of the eukaryotic cell cycle. This Encephalitozoon cuniculi (strain GB-M1) (Microsporidian parasite) protein is Probable cell division protein kinase ECU08_0230.